A 201-amino-acid polypeptide reads, in one-letter code: LexA repressor (201 aa).

A DNA-binding region (H-T-H motif) is located at residues 28–48 (LREIAAQLGISGTLGVMKHLE). Active-site for autocatalytic cleavage activity residues include Ser-120 and Lys-157.

Belongs to the peptidase S24 family. Homodimer.

It carries out the reaction Hydrolysis of Ala-|-Gly bond in repressor LexA.. Represses a number of genes involved in the response to DNA damage (SOS response), including recA and lexA. In the presence of single-stranded DNA, RecA interacts with LexA causing an autocatalytic cleavage which disrupts the DNA-binding part of LexA, leading to derepression of the SOS regulon and eventually DNA repair. The sequence is that of LexA repressor from Citrifermentans bemidjiense (strain ATCC BAA-1014 / DSM 16622 / JCM 12645 / Bem) (Geobacter bemidjiensis).